We begin with the raw amino-acid sequence, 115 residues long: Holo-[acyl-carrier-protein] synthase (115 aa).

Residues Asp-8 and Glu-56 each coordinate Mg(2+).

The protein belongs to the P-Pant transferase superfamily. AcpS family. Requires Mg(2+) as cofactor.

Its subcellular location is the cytoplasm. The enzyme catalyses apo-[ACP] + CoA = holo-[ACP] + adenosine 3',5'-bisphosphate + H(+). Transfers the 4'-phosphopantetheine moiety from coenzyme A to a Ser of acyl-carrier-protein. The protein is Holo-[acyl-carrier-protein] synthase of Ureaplasma parvum serovar 3 (strain ATCC 27815 / 27 / NCTC 11736).